We begin with the raw amino-acid sequence, 166 residues long: 2-C-methyl-D-erythritol 2,4-cyclodiphosphate synthase (166 aa).

Positions 15 and 17 each coordinate a divalent metal cation. 4-CDP-2-C-methyl-D-erythritol 2-phosphate is bound by residues 15-17 (DVH) and 43-44 (HS). Residue H51 participates in a divalent metal cation binding. 4-CDP-2-C-methyl-D-erythritol 2-phosphate contacts are provided by residues 65 to 67 (DIG), 141 to 144 (TTNE), and R151.

This sequence belongs to the IspF family. As to quaternary structure, homotrimer. It depends on a divalent metal cation as a cofactor.

The enzyme catalyses 4-CDP-2-C-methyl-D-erythritol 2-phosphate = 2-C-methyl-D-erythritol 2,4-cyclic diphosphate + CMP. It functions in the pathway isoprenoid biosynthesis; isopentenyl diphosphate biosynthesis via DXP pathway; isopentenyl diphosphate from 1-deoxy-D-xylulose 5-phosphate: step 4/6. Involved in the biosynthesis of isopentenyl diphosphate (IPP) and dimethylallyl diphosphate (DMAPP), two major building blocks of isoprenoid compounds. Catalyzes the conversion of 4-diphosphocytidyl-2-C-methyl-D-erythritol 2-phosphate (CDP-ME2P) to 2-C-methyl-D-erythritol 2,4-cyclodiphosphate (ME-CPP) with a corresponding release of cytidine 5-monophosphate (CMP). In Synechococcus sp. (strain CC9311), this protein is 2-C-methyl-D-erythritol 2,4-cyclodiphosphate synthase.